Consider the following 444-residue polypeptide: Trigger factor (444 aa).

Residues 165 to 250 (GDFAKFDFEG…LHEIQELKIP (86 aa)) enclose the PPIase FKBP-type domain.

This sequence belongs to the FKBP-type PPIase family. Tig subfamily.

The protein localises to the cytoplasm. It carries out the reaction [protein]-peptidylproline (omega=180) = [protein]-peptidylproline (omega=0). In terms of biological role, involved in protein export. Acts as a chaperone by maintaining the newly synthesized protein in an open conformation. Functions as a peptidyl-prolyl cis-trans isomerase. This is Trigger factor from Campylobacter jejuni subsp. jejuni serotype O:6 (strain 81116 / NCTC 11828).